A 257-amino-acid chain; its full sequence is Hydroxyacylglutathione hydrolase (257 aa).

7 residues coordinate Zn(2+): histidine 54, histidine 56, aspartate 58, histidine 59, histidine 113, aspartate 137, and histidine 175.

The protein belongs to the metallo-beta-lactamase superfamily. Glyoxalase II family. Monomer. It depends on Zn(2+) as a cofactor.

It carries out the reaction an S-(2-hydroxyacyl)glutathione + H2O = a 2-hydroxy carboxylate + glutathione + H(+). It functions in the pathway secondary metabolite metabolism; methylglyoxal degradation; (R)-lactate from methylglyoxal: step 2/2. Thiolesterase that catalyzes the hydrolysis of S-D-lactoyl-glutathione to form glutathione and D-lactic acid. This is Hydroxyacylglutathione hydrolase from Trichodesmium erythraeum (strain IMS101).